The following is a 290-amino-acid chain: Ribosomal protein L11 methyltransferase (290 aa).

S-adenosyl-L-methionine-binding residues include Thr-136, Gly-159, Asp-181, and Asn-228.

Belongs to the methyltransferase superfamily. PrmA family.

It is found in the cytoplasm. The catalysed reaction is L-lysyl-[protein] + 3 S-adenosyl-L-methionine = N(6),N(6),N(6)-trimethyl-L-lysyl-[protein] + 3 S-adenosyl-L-homocysteine + 3 H(+). Methylates ribosomal protein L11. This Allorhizobium ampelinum (strain ATCC BAA-846 / DSM 112012 / S4) (Agrobacterium vitis (strain S4)) protein is Ribosomal protein L11 methyltransferase.